The chain runs to 107 residues: Universal stress protein B homolog (107 aa).

A run of 2 helical transmembrane segments spans residues 6–25 and 89–106; these read TILFALMLVTAINVARYVTA and LFILSGSLLVLTTVVAFM.

Belongs to the universal stress protein B family.

The protein resides in the cell inner membrane. This Vibrio cholerae serotype O1 (strain ATCC 39541 / Classical Ogawa 395 / O395) protein is Universal stress protein B homolog.